Here is a 247-residue protein sequence, read N- to C-terminus: Phosphoribosylaminoimidazole-succinocarboxamide synthase (247 aa).

It belongs to the SAICAR synthetase family.

The enzyme catalyses 5-amino-1-(5-phospho-D-ribosyl)imidazole-4-carboxylate + L-aspartate + ATP = (2S)-2-[5-amino-1-(5-phospho-beta-D-ribosyl)imidazole-4-carboxamido]succinate + ADP + phosphate + 2 H(+). Its pathway is purine metabolism; IMP biosynthesis via de novo pathway; 5-amino-1-(5-phospho-D-ribosyl)imidazole-4-carboxamide from 5-amino-1-(5-phospho-D-ribosyl)imidazole-4-carboxylate: step 1/2. In Prochlorococcus marinus (strain NATL1A), this protein is Phosphoribosylaminoimidazole-succinocarboxamide synthase.